A 107-amino-acid chain; its full sequence is Transcriptional regulator Rv3488 (107 aa).

The Cd(2+) site is built by His16, Glu30, His34, and His101.

Homodimer.

Its function is as follows. May have transcription regulation and metal-detoxifying functions through which it may enhance intracellular survival of mycobacteria. Binds to its own promoter region and to the Rv1999c promoter region. It displays strong affinity for cadmium ions, but can also bind zinc, manganese and nickel. Expression increases the intracellular survival of recombinant M.smegmatis in murine macrophage cell line and increases its tolerance to cadmium ions. The sequence is that of Transcriptional regulator Rv3488 from Mycobacterium tuberculosis (strain ATCC 25618 / H37Rv).